The primary structure comprises 319 residues: Aspartate carbamoyltransferase catalytic subunit (319 aa).

Positions 57 and 58 each coordinate carbamoyl phosphate. Lysine 85 lines the L-aspartate pocket. The carbamoyl phosphate site is built by arginine 107, histidine 140, and glutamine 143. Residues arginine 173 and arginine 227 each contribute to the L-aspartate site. Carbamoyl phosphate-binding residues include glycine 268 and proline 269.

Belongs to the aspartate/ornithine carbamoyltransferase superfamily. ATCase family. Heterododecamer (2C3:3R2) of six catalytic PyrB chains organized as two trimers (C3), and six regulatory PyrI chains organized as three dimers (R2).

It carries out the reaction carbamoyl phosphate + L-aspartate = N-carbamoyl-L-aspartate + phosphate + H(+). It participates in pyrimidine metabolism; UMP biosynthesis via de novo pathway; (S)-dihydroorotate from bicarbonate: step 2/3. Functionally, catalyzes the condensation of carbamoyl phosphate and aspartate to form carbamoyl aspartate and inorganic phosphate, the committed step in the de novo pyrimidine nucleotide biosynthesis pathway. The sequence is that of Aspartate carbamoyltransferase catalytic subunit from Mycobacterium tuberculosis (strain ATCC 25177 / H37Ra).